A 548-amino-acid polypeptide reads, in one-letter code: Frizzled-7 (548 aa).

Residues 1–19 (MFATVSLLFCLLLQPSPSA) form the signal peptide. At 20–230 (QQYHGEKGIS…EEEVRFARLW (211 aa)) the chain is on the extracellular side. An FZ domain is found at 31 to 150 (PDHGFCQPIS…HGAGEICVGQ (120 aa)). 5 cysteine pairs are disulfide-bonded: Cys-36-Cys-97, Cys-44-Cys-90, Cys-81-Cys-118, Cys-107-Cys-147, and Cys-111-Cys-135. A glycan (N-linked (GlcNAc...) asparagine) is linked at Asn-50. Residue Asn-151 is glycosylated (N-linked (GlcNAc...) asparagine). A helical membrane pass occupies residues 231–251 (VGIWAILCGISTLFTVLTYLV). The Cytoplasmic portion of the chain corresponds to 252–262 (DMRRFSYPERP). Residues 263 to 283 (IIFLSGCYFMVAVAYTAGFLL) traverse the membrane as a helical segment. Topologically, residues 284–310 (EERGVCVERFSEDSYRTVAQGTKKEGC) are extracellular. A helical transmembrane segment spans residues 311–331 (TILFMILYFFGMASSIWWVIL). The Cytoplasmic portion of the chain corresponds to 332–353 (SLTWFLAAGMKWGHEAIEANSQ). Residues 354–374 (YFHLAAWAVPAVKTITILAMG) form a helical membrane-spanning segment. Topologically, residues 375–397 (QVDGDILSGVCYVGINSVDSLRG) are extracellular. A helical transmembrane segment spans residues 398 to 418 (FVLAPLFVYLFIGTSFLLAGF). The Cytoplasmic segment spans residues 419–444 (VSLFRIRTIMKHDGTKTEKLEKLMVR). Residues 445-465 (IGVFSVMYTVPATIVLACYFY) traverse the membrane as a helical segment. Residues 466 to 502 (EQAFRDTWEKTWLVQTCKGFAVPCPNYNFAPMSPDFT) lie on the Extracellular side of the membrane. A helical membrane pass occupies residues 503-523 (VFMIKYLMTMIVGITSSFWIW). Topologically, residues 524-548 (SGKTLQSWRRFYHRLSNGGKGETAV) are cytoplasmic. The Lys-Thr-X-X-X-Trp motif, mediates interaction with the PDZ domain of Dvl family members signature appears at 526 to 531 (KTLQSW). The PDZ-binding signature appears at 546–548 (TAV).

It belongs to the G-protein coupled receptor Fz/Smo family. As to quaternary structure, interacts with wnt11 and sdc4. The extracellular domain interacts with the extracellular domain of pcdh8/papc.

Its subcellular location is the cell membrane. The protein localises to the endosome membrane. Receptor for Wnt proteins. Acts in both canonical and non-canonical Wnt pathways. Although different papers report differing Wnt preferences, wnt5a, wnt8b and wnt11 have been proposed as synergists. In the canonical Wnt pathway, acts via beta-catenin to promote the expression of the dorsal genes siamois, twin and nodal3 and to establish the dorsal axis of the embryo and induce dorsal mesoderm formation. In a non-canonical Wnt/planar cell polarity (PCP) pathway, acts with sdc4 and dvl2/dsh to regulate convergent extension movements in gastrulation. Triggers phosphorylation of dvl2/dsh and its translocation to the plasma membrane. In a third branch of Wnt signaling, acts in a non-canonical pathway via trimeric G proteins, and independently of dvl2/dsh, to recruit protein kinase C (PKC) to the membrane and thus activate PKC. PKC signaling controls cell sorting and tissue separation during gastrulation. This is Frizzled-7 from Xenopus tropicalis (Western clawed frog).